The following is a 343-amino-acid chain: Heme A synthase (343 aa).

8 helical membrane passes run 13–33 (VAIWLFIVAAMVFAMVVVGGA), 96–116 (HRLLGRTVGAVYAIPLIVFLI), 130–150 (AMLGLGGLQGLVGWWMVSSGL), 161–181 (LMTHLGLALALFVLLIWTALD), 197–217 (GWALAFLGAVFFQSLLGALVA), 258–278 (FNHRIFAYALLLAAVVLVVLA), 294–314 (AVAAVVFLQAALGVWTLMAAV), and 318–338 (LGVLHQAGAAVLLAVATAFAW). His260 contacts heme. His322 is a heme binding site.

This sequence belongs to the COX15/CtaA family. Type 2 subfamily. As to quaternary structure, interacts with CtaB. The cofactor is heme b.

It is found in the cell membrane. The enzyme catalyses Fe(II)-heme o + 2 A + H2O = Fe(II)-heme a + 2 AH2. It participates in porphyrin-containing compound metabolism; heme A biosynthesis; heme A from heme O: step 1/1. Its function is as follows. Catalyzes the conversion of heme O to heme A by two successive hydroxylations of the methyl group at C8. The first hydroxylation forms heme I, the second hydroxylation results in an unstable dihydroxymethyl group, which spontaneously dehydrates, resulting in the formyl group of heme A. The protein is Heme A synthase of Caulobacter vibrioides (strain ATCC 19089 / CIP 103742 / CB 15) (Caulobacter crescentus).